The sequence spans 37 residues: Large ribosomal subunit protein bL36 (37 aa).

This sequence belongs to the bacterial ribosomal protein bL36 family.

The sequence is that of Large ribosomal subunit protein bL36 from Vesicomyosocius okutanii subsp. Calyptogena okutanii (strain HA).